Reading from the N-terminus, the 239-residue chain is Phosducin-like protein 3 (239 aa).

Residues 16 to 37 (KKGILPPKETPVEEEEDEQLHL) are disordered. The Phosducin domain occupies 28–201 (EEEEDEQLHL…LEWRLSESGA (174 aa)). The residue at position 41 (S41) is a Phosphoserine. The tract at residues 89–239 (FGELKEISGQ…RDGEEDSDED (151 aa)) is thioredoxin fold. Polar residues predominate over residues 217–227 (QLMTSIRCSAN). Positions 217 to 239 (QLMTSIRCSANTHRDGEEDSDED) are disordered.

This sequence belongs to the phosducin family. Interacts (via thioredoxin fold region) with kdr/vegfr2 (via juxtamembrane domain). In terms of tissue distribution, expressed in endothelial cells.

Its subcellular location is the cytoplasm. The protein resides in the perinuclear region. It is found in the endoplasmic reticulum. Its function is as follows. Acts as a chaperone for the angiogenic VEGF receptor KDR/VEGFR2, increasing its abundance by inhibiting its ubiquitination and degradation. Inhibits the folding activity of the chaperonin-containing T-complex (CCT) which leads to inhibition of cytoskeletal actin folding. Acts as a chaperone during heat shock alongside HSP90 and HSP40/70 chaperone complexes. Modulates the activation of caspases during apoptosis. This is Phosducin-like protein 3 from Danio rerio (Zebrafish).